The following is a 1196-amino-acid chain: Major DNA-binding protein (1196 aa).

The segment at 499 to 512 is a zinc-finger region; that stretch reads CNLCTFDTRHACVH. Short sequence motifs (required for filament formation) lie at residues 843-844 and 1142-1144; these read FW and FNF. The interval 1158-1196 is disordered; sequence GGPGAPGPAFAGRKRAFHGDDPFGEGPPDKKGDLTLDML. Positions 1170–1196 are required for nuclear localization; sequence RKRAFHGDDPFGEGPPDKKGDLTLDML. Over residues 1174–1196 the composition is skewed to basic and acidic residues; that stretch reads FHGDDPFGEGPPDKKGDLTLDML.

Belongs to the herpesviridae major DNA-binding protein family. In terms of assembly, homooligomers. Forms double-helical filaments necessary for the formation of replication compartments within the host nucleus. Interacts with the origin-binding protein. Interacts with the helicase primase complex; this interaction stimulates primer synthesis activity of the helicase-primase complex. Interacts with the DNA polymerase. Interacts with the alkaline exonuclease; this interaction increases its nuclease processivity. Interacts with ICP27; this interaction plays a role in the stimulation of late gene transcription.

The protein localises to the host nucleus. In terms of biological role, plays several crucial roles in viral infection. Participates in the opening of the viral DNA origin to initiate replication by interacting with the origin-binding protein. May disrupt loops, hairpins and other secondary structures present on ssDNA to reduce and eliminate pausing of viral DNA polymerase at specific sites during elongation. Promotes viral DNA recombination by performing strand-transfer, characterized by the ability to transfer a DNA strand from a linear duplex to a complementary single-stranded DNA circle. Can also catalyze the renaturation of complementary single strands. Additionally, reorganizes the host cell nucleus, leading to the formation of prereplicative sites and replication compartments. This process is driven by the protein which can form double-helical filaments in the absence of DNA. The sequence is that of Major DNA-binding protein from Homo sapiens (Human).